The primary structure comprises 304 residues: MADFDINILGCGSALPTTRHLATSQIVDLRDKLYMIDCGEGTQVQMRRMRIKFSRLNHIFISHLHGDHCFGLPGLISTLGMLGRNGELVIHGPKEIESYMRPVLDIFCKGLPYEIRFNLIDPTTHSLVMEDRSLSVYSIPLKHRIPCCGYLFAEKAKEAHIIREMTDFYQVPVRMMQEIKRGADFVTPEGEVIPNARLTRPAVAPKRYAYCSDTAFHPSIIPIIEGVDLLYHEATFAECDAARAKETFHSTARQAAEIAYKAQVKRLVIGHYSARYEDMAPLKKEADKIFPGTILGEEGMRLSV.

Residues His63, His65, Asp67, His68, His143, Asp213, and His271 each contribute to the Zn(2+) site. The active-site Proton acceptor is Asp67.

The protein belongs to the RNase Z family. Homodimer. The cofactor is Zn(2+).

The catalysed reaction is Endonucleolytic cleavage of RNA, removing extra 3' nucleotides from tRNA precursor, generating 3' termini of tRNAs. A 3'-hydroxy group is left at the tRNA terminus and a 5'-phosphoryl group is left at the trailer molecule.. Functionally, zinc phosphodiesterase, which displays some tRNA 3'-processing endonuclease activity. Probably involved in tRNA maturation, by removing a 3'-trailer from precursor tRNA. This is Ribonuclease Z from Parabacteroides distasonis (strain ATCC 8503 / DSM 20701 / CIP 104284 / JCM 5825 / NCTC 11152).